The primary structure comprises 224 residues: UPF0758 protein ABO_0214 (224 aa).

The 123-residue stretch at 102-224 (PLDNPDKAGQ…WVSLASRGAV (123 aa)) folds into the MPN domain. Zn(2+) contacts are provided by histidine 173, histidine 175, and aspartate 186. The JAMM motif signature appears at 173-186 (HNHPSGVAEPSQSD).

Belongs to the UPF0758 family.

This Alcanivorax borkumensis (strain ATCC 700651 / DSM 11573 / NCIMB 13689 / SK2) protein is UPF0758 protein ABO_0214.